A 290-amino-acid polypeptide reads, in one-letter code: MDIGLREWLIVIGLIVIAGILFDGWRRMRGGKGKLKFKLDRSFANLPDDDGDSAELLGPARVVEHREPSFDEQDLPSVSAREGKERKGGKRQDEPRQGDLDLDEGMALEADPSDAAEPLEPRKGKSKGRKEKEREKAPSVAAAEPAPVDEVLIINVIARDESGFKGPALLQNILESGLRFGDMDIFHRHESMAGNGEILFSMANAVKPGTFDLDDIDNFSTRAVSFFLGLPGPRHPKQAFDVMVAAARKLAHELNGELKDEQRSVLTAQTIEHYRQRIIDHERRSLMQKR.

Residue methionine 1 is a topological domain, periplasmic. The helical transmembrane segment at 2–22 (DIGLREWLIVIGLIVIAGILF) threads the bilayer. The Cytoplasmic portion of the chain corresponds to 23–290 (DGWRRMRGGK…HERRSLMQKR (268 aa)). The disordered stretch occupies residues 66 to 143 (REPSFDEQDL…REKAPSVAAA (78 aa)). Positions 81 to 99 (REGKERKGGKRQDEPRQGD) are enriched in basic and acidic residues. Positions 100-114 (LDLDEGMALEADPSD) are enriched in acidic residues.

This sequence belongs to the ZipA family. In terms of assembly, interacts with FtsZ via their C-terminal domains.

The protein resides in the cell inner membrane. In terms of biological role, essential cell division protein that stabilizes the FtsZ protofilaments by cross-linking them and that serves as a cytoplasmic membrane anchor for the Z ring. Also required for the recruitment to the septal ring of downstream cell division proteins. The sequence is that of Cell division protein ZipA from Pseudomonas paraeruginosa (strain DSM 24068 / PA7) (Pseudomonas aeruginosa (strain PA7)).